Here is a 429-residue protein sequence, read N- to C-terminus: Glucose-1-phosphate adenylyltransferase (429 aa).

Residues Gly-162, 177 to 178 (EK), and Ser-209 contribute to the alpha-D-glucose 1-phosphate site.

This sequence belongs to the bacterial/plant glucose-1-phosphate adenylyltransferase family. In terms of assembly, homotetramer.

The catalysed reaction is alpha-D-glucose 1-phosphate + ATP + H(+) = ADP-alpha-D-glucose + diphosphate. It participates in glycan biosynthesis; glycogen biosynthesis. Functionally, involved in the biosynthesis of ADP-glucose, a building block required for the elongation reactions to produce glycogen. Catalyzes the reaction between ATP and alpha-D-glucose 1-phosphate (G1P) to produce pyrophosphate and ADP-Glc. This chain is Glucose-1-phosphate adenylyltransferase, found in Cyanothece sp. (strain PCC 7425 / ATCC 29141).